Consider the following 492-residue polypeptide: Probable serine/threonine-protein kinase WNK9 (492 aa).

Residues 25–282 form the Protein kinase domain; that stretch reads GRYNEVLGKG…ACELLDDHFL (258 aa). ATP-binding positions include 105 to 108 and lysine 155; that span reads TEMF. Residue aspartate 172 is the Proton acceptor of the active site.

This sequence belongs to the protein kinase superfamily. Ser/Thr protein kinase family. WNK subfamily.

It catalyses the reaction L-seryl-[protein] + ATP = O-phospho-L-seryl-[protein] + ADP + H(+). The enzyme catalyses L-threonyl-[protein] + ATP = O-phospho-L-threonyl-[protein] + ADP + H(+). In terms of biological role, may regulate flowering time by modulating the photoperiod pathway. In Arabidopsis thaliana (Mouse-ear cress), this protein is Probable serine/threonine-protein kinase WNK9 (WNK9).